Consider the following 153-residue polypeptide: MALLVWQDDLNIGIDVIDQQHRRIIEMLNHLHVAQTSMQRAAVGEVIDEVVDYTMSHFAFEEELMEEAGYPFCAAHKRVHEVFIKRVAEYRLRFQAGEDISDELRTMLSRWLFNHIRGDDQAYADQVKAHLNQFAREHQSGGWLGRTLKRFFG.

7 residues coordinate Fe cation: histidine 21, histidine 57, glutamate 61, histidine 76, histidine 80, histidine 115, and aspartate 120.

Belongs to the hemerythrin family. Monomer.

In terms of biological role, oxygen-binding protein. May be involved in a storage mechanism or for delivery to oxygen-requiring enzymes. The oxygen-binding site contains two iron atoms. This is Bacteriohemerythrin from Stenotrophomonas maltophilia (strain R551-3).